Consider the following 175-residue polypeptide: MVVYDLLVSLSKESIDVLRFVEANLAAFNQQYIFFNIQRKNSITTPLLITPQQEKISQIVDFLMDEYNKNNRRPSGPPREQPMHPLLPYQQSSDEQPMMPYQQPPGDDDQPYEQIYHKKHASQQVNTELSDYYQHILALGDEDKVMDSMLKLPEKAKRDDSDDEDSMFPIKKLTT.

2 disordered regions span residues N68–Y112 and P153–T175. Positions D94–P105 are enriched in low complexity.

It belongs to the asfivirus H171R family.

The protein resides in the virion. This is an uncharacterized protein from African swine fever virus (isolate Tick/Malawi/Lil 20-1/1983) (ASFV).